The primary structure comprises 389 residues: Probable peptidoglycan glycosyltransferase FtsW (389 aa).

Residues 1–14 (MPIRDWRQQSQRWP) are Cytoplasmic-facing. Residues 15 to 35 (IDYWLIGALAILITLGLTMVA) form a helical membrane-spanning segment. At 36–57 (SSSIAISEKRFGDPTHYLLRQM) the chain is on the periplasmic side. Residues 58–78 (FSMGLGLMAAYIVLKIPLSFW) form a helical membrane-spanning segment. The Cytoplasmic portion of the chain corresponds to 79 to 84 (RKHRGQ). The chain crosses the membrane as a helical span at residues 85 to 105 (LFIVGLVLLVLVLVFGREING). Residues 106–111 (SKRWLP) lie on the Periplasmic side of the membrane. A helical transmembrane segment spans residues 112-132 (LVLMNFQVSEFMKIAVVVFMA). Topologically, residues 133 to 144 (GYLDRHATAVRE) are cytoplasmic. A helical membrane pass occupies residues 145–165 (SFEAVIRLALPFGVMAILLLL). Topologically, residues 166 to 168 (EPD) are periplasmic. Residues 169–189 (FGSTFVIAVIITGMLLIAGAP) form a helical membrane-spanning segment. Residues 190–191 (WR) lie on the Cytoplasmic side of the membrane. The chain crosses the membrane as a helical span at residues 192–212 (FFVMTVLPIATLLVMMVITSP). Topologically, residues 213–268 (YRMARVTNFLDPWSDPFGNGYQLTQALIASGRGEWFGVGIGESVQKLLYLPDAHTD) are periplasmic. A helical transmembrane segment spans residues 269-289 (FLFSIYAEEYGLIGVAFLALL). Residues 290 to 310 (YLTLLYRCFRIGRKAFNQTHY) lie on the Cytoplasmic side of the membrane. The chain crosses the membrane as a helical span at residues 311 to 331 (FGGLIAYGVGIWIVLQAMINM). Residues 332–344 (GVNLGLFPTKGLT) are Periplasmic-facing. The chain crosses the membrane as a helical span at residues 345–365 (LPFMSYGGSSVLMLFIGVAMV). The Cytoplasmic segment spans residues 366 to 389 (LRVDLETRQAVLEHSVDESGQGKR).

Belongs to the SEDS family. FtsW subfamily.

The protein resides in the cell inner membrane. It catalyses the reaction [GlcNAc-(1-&gt;4)-Mur2Ac(oyl-L-Ala-gamma-D-Glu-L-Lys-D-Ala-D-Ala)](n)-di-trans,octa-cis-undecaprenyl diphosphate + beta-D-GlcNAc-(1-&gt;4)-Mur2Ac(oyl-L-Ala-gamma-D-Glu-L-Lys-D-Ala-D-Ala)-di-trans,octa-cis-undecaprenyl diphosphate = [GlcNAc-(1-&gt;4)-Mur2Ac(oyl-L-Ala-gamma-D-Glu-L-Lys-D-Ala-D-Ala)](n+1)-di-trans,octa-cis-undecaprenyl diphosphate + di-trans,octa-cis-undecaprenyl diphosphate + H(+). The protein operates within cell wall biogenesis; peptidoglycan biosynthesis. Peptidoglycan polymerase that is essential for cell division. The sequence is that of Probable peptidoglycan glycosyltransferase FtsW from Hydrogenovibrio crunogenus (strain DSM 25203 / XCL-2) (Thiomicrospira crunogena).